We begin with the raw amino-acid sequence, 349 residues long: Probable dual-specificity RNA methyltransferase RlmN (349 aa).

Glutamate 94 (proton acceptor) is an active-site residue. The Radical SAM core domain maps to 100–334 (TETRTTACVS…VKVRRSRGKD (235 aa)). The cysteines at positions 107 and 339 are disulfide-linked. [4Fe-4S] cluster is bound by residues cysteine 114, cysteine 118, and cysteine 121. S-adenosyl-L-methionine-binding positions include 165 to 166 (GE), serine 197, 220 to 222 (SLH), and asparagine 296. Cysteine 339 serves as the catalytic S-methylcysteine intermediate.

It belongs to the radical SAM superfamily. RlmN family. [4Fe-4S] cluster serves as cofactor.

The protein resides in the cytoplasm. It catalyses the reaction adenosine(2503) in 23S rRNA + 2 reduced [2Fe-2S]-[ferredoxin] + 2 S-adenosyl-L-methionine = 2-methyladenosine(2503) in 23S rRNA + 5'-deoxyadenosine + L-methionine + 2 oxidized [2Fe-2S]-[ferredoxin] + S-adenosyl-L-homocysteine. It carries out the reaction adenosine(37) in tRNA + 2 reduced [2Fe-2S]-[ferredoxin] + 2 S-adenosyl-L-methionine = 2-methyladenosine(37) in tRNA + 5'-deoxyadenosine + L-methionine + 2 oxidized [2Fe-2S]-[ferredoxin] + S-adenosyl-L-homocysteine. Functionally, specifically methylates position 2 of adenine 2503 in 23S rRNA and position 2 of adenine 37 in tRNAs. In Flavobacterium johnsoniae (strain ATCC 17061 / DSM 2064 / JCM 8514 / BCRC 14874 / CCUG 350202 / NBRC 14942 / NCIMB 11054 / UW101) (Cytophaga johnsonae), this protein is Probable dual-specificity RNA methyltransferase RlmN.